The following is a 407-amino-acid chain: Nicotinate phosphoribosyltransferase (407 aa).

Histidine 224 carries the post-translational modification Phosphohistidine; by autocatalysis.

This sequence belongs to the NAPRTase family. Transiently phosphorylated on a His residue during the reaction cycle. Phosphorylation strongly increases the affinity for substrates and increases the rate of nicotinate D-ribonucleotide production. Dephosphorylation regenerates the low-affinity form of the enzyme, leading to product release.

The enzyme catalyses nicotinate + 5-phospho-alpha-D-ribose 1-diphosphate + ATP + H2O = nicotinate beta-D-ribonucleotide + ADP + phosphate + diphosphate. Its pathway is cofactor biosynthesis; NAD(+) biosynthesis; nicotinate D-ribonucleotide from nicotinate: step 1/1. In terms of biological role, catalyzes the synthesis of beta-nicotinate D-ribonucleotide from nicotinate and 5-phospho-D-ribose 1-phosphate at the expense of ATP. This Pseudomonas savastanoi pv. phaseolicola (strain 1448A / Race 6) (Pseudomonas syringae pv. phaseolicola (strain 1448A / Race 6)) protein is Nicotinate phosphoribosyltransferase.